The chain runs to 727 residues: DNA replication licensing factor MCM5 (727 aa).

In terms of domain architecture, MCM spans 325–531; the sequence is VYKNICTKIA…SQDKEIASHI (207 aa). 375 to 382 lines the ATP pocket; sequence GDPSTAKS. The Arginine finger signature appears at 507–510; that stretch reads SRFD.

The protein belongs to the MCM family. In terms of assembly, component of the minichromosome maintenance (MCM) complex, a heterotetramer composed of MCM2, MCM3, MCM4, MCM5, MCM6 and MCM7. Interacts with EGT1. Expressed in shoot apex and flower buds.

Its subcellular location is the nucleus. The protein localises to the cytoplasm. The catalysed reaction is ATP + H2O = ADP + phosphate + H(+). Functionally, probable component of the MCM2-7 complex (MCM complex) that may function as a DNA helicase and which is essential to undergo a single round of replication initiation and elongation per cell cycle in eukaryotic cells. The sequence is that of DNA replication licensing factor MCM5 (MCM5) from Arabidopsis thaliana (Mouse-ear cress).